A 342-amino-acid polypeptide reads, in one-letter code: (+)-pulegone reductase (342 aa).

Residues 163–166 (GSVG), lysine 189, tyrosine 205, asparagine 229, 251–257 (CGMVSQY), 281–283 (FVV), and asparagine 331 contribute to the NADP(+) site.

It belongs to the NADP-dependent oxidoreductase L4BD family.

It localises to the cytoplasm. The enzyme catalyses (2R,5R)-isomenthone + NADP(+) = (R)-pulegone + NADPH + H(+). It carries out the reaction (1R,4S)-menthone + NADP(+) = (R)-pulegone + NADPH + H(+). The protein operates within secondary metabolite biosynthesis; terpenoid biosynthesis. Its activity is regulated as follows. Not inhibited by (+)-menthofuran. Its function is as follows. Monoterpene synthase that catalyzes the specific reduction of the 4,8-double bond of (+)-pulegone to produce both (-)-menthone and (+)-isomenthone in a 70:30 ratio. Unable to utilize either (-)-isopiperitenone or (+)-cis-isopulegone, or to catalyze the reverse reaction with (-)-menthone or (+)-isomenthone. Has an absolute requirement for NADPH. This chain is (+)-pulegone reductase, found in Mentha piperita (Peppermint).